A 385-amino-acid chain; its full sequence is 8-amino-7-oxononanoate synthase (385 aa).

Residue arginine 21 coordinates substrate. A pyridoxal 5'-phosphate-binding site is contributed by 108-109; that stretch reads GF. Substrate is bound at residue histidine 133. Positions 179, 207, and 233 each coordinate pyridoxal 5'-phosphate. Lysine 236 bears the N6-(pyridoxal phosphate)lysine mark. Threonine 352 is a binding site for substrate.

It belongs to the class-II pyridoxal-phosphate-dependent aminotransferase family. BioF subfamily. Homodimer. The cofactor is pyridoxal 5'-phosphate.

The catalysed reaction is 6-carboxyhexanoyl-[ACP] + L-alanine + H(+) = (8S)-8-amino-7-oxononanoate + holo-[ACP] + CO2. It functions in the pathway cofactor biosynthesis; biotin biosynthesis. Functionally, catalyzes the decarboxylative condensation of pimeloyl-[acyl-carrier protein] and L-alanine to produce 8-amino-7-oxononanoate (AON), [acyl-carrier protein], and carbon dioxide. The polypeptide is 8-amino-7-oxononanoate synthase (Salmonella enteritidis PT4 (strain P125109)).